A 234-amino-acid polypeptide reads, in one-letter code: Geranylgeranylglyceryl phosphate synthase (234 aa).

Mg(2+)-binding residues include D24 and S52. Sn-glycerol 1-phosphate-binding positions include 172–178 (YLEAGSG), 203–204 (GG), and 225–226 (GT).

Belongs to the GGGP/HepGP synthase family. Group II subfamily. Homodimer. Requires Mg(2+) as cofactor.

The catalysed reaction is sn-glycerol 1-phosphate + (2E,6E,10E)-geranylgeranyl diphosphate = sn-3-O-(geranylgeranyl)glycerol 1-phosphate + diphosphate. Its function is as follows. Prenyltransferase that catalyzes the transfer of the geranylgeranyl moiety of geranylgeranyl diphosphate (GGPP) to the C3 hydroxyl of sn-glycerol-1-phosphate (G1P). The polypeptide is Geranylgeranylglyceryl phosphate synthase (Zunongwangia profunda (strain DSM 18752 / CCTCC AB 206139 / SM-A87) (Wangia profunda)).